We begin with the raw amino-acid sequence, 464 residues long: Delta(5) fatty acid desaturase A (464 aa).

A Cytochrome b5 heme-binding domain is found at 13–90 (GKQYSWSELA…LKNYEIGYIS (78 aa)). Positions 48 and 71 each coordinate heme. 2 consecutive transmembrane segments (helical) span residues 125–145 (AVSIFSRLALVYLLVFVTYYL) and 153–173 (FYLNCFLAIVYALCNSLFSMH). A Histidine box-1 motif is present at residues 176-180 (HDSCH). The Histidine box-2 motif lies at 212 to 217 (HVIGHH). The helical transmembrane segment at 318-338 (FTDLICYFLIAEFVFGWYLTI) threads the bilayer. Residues 396-400 (QVVHH) carry the Histidine box-3 motif.

The protein belongs to the fatty acid desaturase type 1 family. It depends on Fe cation as a cofactor.

Its subcellular location is the membrane. Its function is as follows. Specific for desaturation of the 5 position in C16 and C18 fatty acids. The protein is Delta(5) fatty acid desaturase A (fadA) of Dictyostelium discoideum (Social amoeba).